The primary structure comprises 617 residues: Protein kinase STUNTED (617 aa).

Residues 162–187 (SSELSEGFSDKDLAKTTGQEKRKISG) form a disordered region. Over residues 169–184 (FSDKDLAKTTGQEKRK) the composition is skewed to basic and acidic residues. Residues 277-555 (FSLENLIGKG…RGEDDVSKWV (279 aa)) form the Protein kinase domain. ATP-binding positions include 283-291 (IGKGGCNEV) and Lys305. Tyr350 is subject to Phosphotyrosine. Asp399 (proton acceptor) is an active-site residue. A Phosphoserine modification is found at Ser403. Thr439 is subject to Phosphothreonine. Tyr447 carries the phosphotyrosine modification. The disordered stretch occupies residues 590-617 (DSVSNSSLERSNNSLFSSSSSSSQELQS). Positions 591 to 617 (SVSNSSLERSNNSLFSSSSSSSQELQS) are enriched in low complexity.

It belongs to the protein kinase superfamily. Ser/Thr protein kinase family. In terms of tissue distribution, expressed ubiquitously, mostly in roots, to a lower extent in leaves, floral buds and stems, and, at low levels, in flowers and siliques.

The protein resides in the cytoplasm. Functionally, promotes cell proliferation in the gibberellic acid (GA) signaling pathway, acting downstream of RGA, and possibly through a negative regulation of two cyclin-dependent kinase inhibitors SIM and SMR1. The polypeptide is Protein kinase STUNTED (Arabidopsis thaliana (Mouse-ear cress)).